Here is a 347-residue protein sequence, read N- to C-terminus: Ubiquinone biosynthesis protein coq-4, mitochondrial (347 aa).

The N-terminal 49 residues, 1 to 49 (MEVTALRRSAALVARASSQNAIRPAVCAAISSTSPTPPTQIQTQQTRQF), are a transit peptide targeting the mitochondrion. The Zn(2+) site is built by H185, D186, H189, and E201. The disordered stretch occupies residues 284 to 310 (IRKREREEKRRRKEMERMLSGRGTEDV).

This sequence belongs to the COQ4 family. As to quaternary structure, component of a multi-subunit COQ enzyme complex, composed of at least coq-3, coq-4, coq-5, coq-6, coq-7 and coq-9. It depends on Zn(2+) as a cofactor.

The protein localises to the mitochondrion inner membrane. It catalyses the reaction a 4-hydroxy-3-methoxy-5-(all-trans-polyprenyl)benzoate + H(+) = a 2-methoxy-6-(all-trans-polyprenyl)phenol + CO2. Its pathway is cofactor biosynthesis; ubiquinone biosynthesis. Its function is as follows. Lyase that catalyzes the C1-decarboxylation of 4-hydroxy-3-methoxy-5-(all-trans-polyprenyl)benzoic acid into 2-methoxy-6-(all-trans-polyprenyl)phenol during ubiquinone biosynthesis. This chain is Ubiquinone biosynthesis protein coq-4, mitochondrial, found in Neurospora crassa (strain ATCC 24698 / 74-OR23-1A / CBS 708.71 / DSM 1257 / FGSC 987).